A 508-amino-acid polypeptide reads, in one-letter code: MLO-like protein 3 (508 aa).

Over methionine 1–glutamate 21 the chain is Extracellular. The chain crosses the membrane as a helical span at residues threonine 22–glutamate 42. The Cytoplasmic segment spans residues arginine 43–lysine 68. A helical membrane pass occupies residues serine 69–serine 89. At lysine 90–tyrosine 153 the chain is on the extracellular side. The chain crosses the membrane as a helical span at residues phenylalanine 154–methionine 174. Over alanine 175 to lysine 275 the chain is Cytoplasmic. Residues threonine 276 to valine 296 form a helical membrane-spanning segment. Topologically, residues serine 297–tyrosine 304 are extracellular. The chain crosses the membrane as a helical span at residues methionine 305–alanine 325. The Cytoplasmic portion of the chain corresponds to lysine 326 to arginine 357. A helical transmembrane segment spans residues phenylalanine 358–valine 378. At tryptophan 379 to leucine 401 the chain is on the extracellular side. A helical membrane pass occupies residues valine 402–valine 422. At threonine 423 to arginine 508 the chain is on the cytoplasmic side. The calmodulin-binding stretch occupies residues glutamate 436–glutamine 457. The disordered stretch occupies residues lysine 453 to arginine 492. Serine 494 is modified (phosphoserine).

Belongs to the MLO family.

It localises to the membrane. May be involved in modulation of pathogen defense and leaf cell death. Activity seems to be regulated by Ca(2+)-dependent calmodulin binding and seems not to require heterotrimeric G proteins. The protein is MLO-like protein 3 (MLO3) of Arabidopsis thaliana (Mouse-ear cress).